A 371-amino-acid polypeptide reads, in one-letter code: Alanine racemase (371 aa).

Residue lysine 40 is the Proton acceptor; specific for D-alanine of the active site. At lysine 40 the chain carries N6-(pyridoxal phosphate)lysine. Arginine 136 lines the substrate pocket. Tyrosine 263 acts as the Proton acceptor; specific for L-alanine in catalysis. Methionine 310 is a substrate binding site.

This sequence belongs to the alanine racemase family. Pyridoxal 5'-phosphate serves as cofactor.

It catalyses the reaction L-alanine = D-alanine. It participates in amino-acid biosynthesis; D-alanine biosynthesis; D-alanine from L-alanine: step 1/1. In terms of biological role, catalyzes the interconversion of L-alanine and D-alanine. May also act on other amino acids. The sequence is that of Alanine racemase (alr) from Streptococcus mutans serotype c (strain ATCC 700610 / UA159).